The primary structure comprises 1499 residues: Rho GTPase-activating protein 35 (1499 aa).

The has GTPase activity, required for proper localization stretch occupies residues 1 to 266 (MMMARKQDVR…IPYFEALKQQ (266 aa)). Residues Lys28, 33-37 (IGKSC), Leu52, Ser56, 95-97 (EQT), 201-203 (KCD), and 229-231 (SAR) each bind GTP. 4 consecutive FF domains span residues 270–327 (IATA…HIHR), 368–422 (KLLE…HLEK), 429–483 (RAEM…HQKQ), and 485–550 (IDRA…HIHF). Tyr308 carries the post-translational modification Phosphotyrosine. Ser589 is modified (phosphoserine). The region spanning 592–767 (DLNIDRINLV…LLDSKRNLNL (176 aa)) is the pG1 pseudoGTPase domain. Residues Ser770 and Ser773 each carry the phosphoserine modification. The region spanning 783–947 (RIVMCLMCGD…FKDVVEKKNI (165 aa)) is the pG2 pseudoGTPase domain. Phosphoserine is present on residues Ser970, Ser975, Ser985, and Ser1072. Tyr1087 carries the post-translational modification Phosphotyrosine. Phosphotyrosine; by ABL2 and PTK6 is present on Tyr1105. Positions 1124 to 1141 (KAQSNGSGNGSDSEMDTS) are enriched in polar residues. Residues 1124-1148 (KAQSNGSGNGSDSEMDTSSLERGRK) form a disordered region. 6 positions are modified to phosphoserine: Ser1134, Ser1142, Ser1150, Ser1176, Ser1179, and Ser1221. Residues 1177-1207 (VGSDDELGPIRKKEEDQASQGYKGDNAVIPY) form a disordered region. The interval 1213 to 1236 (PRRRNILRSLRRNTKKPKPKPRPS) is required for phospholipid binding and regulation of the substrate preference. At Thr1226 the chain carries Phosphothreonine. Position 1236 is a phosphoserine (Ser1236). The Rho-GAP domain occupies 1249 to 1436 (VPLTTVVTPE…LFIQQCPFFF (188 aa)). The segment at 1446–1499 (GAAPGSPSAMAPTVPFLTSTPATSQPSPPQSPPPTPQSPMQPLLSSQLQAEHTL) is disordered. Positions 1448 to 1470 (APGSPSAMAPTVPFLTSTPATSQ) are enriched in low complexity. The span at 1471–1484 (PSPPQSPPPTPQSP) shows a compositional bias: pro residues. A phosphoserine mark is found at Ser1472 and Ser1476. Thr1480 is modified (phosphothreonine). Ser1483 carries the phosphoserine modification. Residues 1485 to 1499 (MQPLLSSQLQAEHTL) show a composition bias toward low complexity.

Interacts with the general transcription factor GTF2I, the interaction sequesters GTF2I in the cytoplasm. Interacts with RASA1. In terms of processing, phosphorylation of Tyr-1105 by PTK6 promotes the association with RASA1, inactivating RHOA while activating RAS. Phosphorylation at Tyr-308 by PDGFRA inhibits binding to GTF2I. Phosphorylated by PRKCA at Ser-1221 and Thr-1226, induces relocalization from the cytoplasm to regions of plasma membrane ruffling and prevents the binding and substrate specificity regulation by phospholipids. In brain, phosphorylated by FYN and SRC. During focal adhesion formation, phosphorylated by MAPK1 and MAPK3 at the C-terminal region, probably at Ser-1451, Ser-1476, Thr-1480 and Ser-1483. Phosphorylation by MAPK1 and MAPK3 inhibits GAP function and localizes ARGHAP35 away from newly forming focal adhesions and stress fibers in cells spreading on fibronectin. Phosphorylation at Ser-1476 and Thr-1480 by GSK3B requires priming by MAPK and inhibits RhoGAP activity and modulates polarized cell migration. In terms of tissue distribution, expressed in the developing kidneys. Expressed in all regions of the mature nervous system (at protein level). Detected in neutrophils (at protein level).

Its subcellular location is the cytoplasm. The protein resides in the cytoskeleton. The protein localises to the cilium basal body. It localises to the nucleus. It is found in the cell membrane. Functionally, rho GTPase-activating protein (GAP). Binds several acidic phospholipids which inhibits the Rho GAP activity to promote the Rac GAP activity. This binding is inhibited by phosphorylation by PRKCA. Involved in cell differentiation as well as cell adhesion and migration, plays an important role in retinal tissue morphogenesis, neural tube fusion, midline fusion of the cerebral hemispheres and mammary gland branching morphogenesis. Transduces signals from p21-ras to the nucleus, acting via the ras GTPase-activating protein (GAP). Transduces SRC-dependent signals from cell-surface adhesion molecules, such as laminin, to promote neurite outgrowth. Regulates axon outgrowth, guidance and fasciculation. Modulates Rho GTPase-dependent F-actin polymerization, organization and assembly, is involved in polarized cell migration and in the positive regulation of ciliogenesis and cilia elongation. During mammary gland development, is required in both the epithelial and stromal compartments for ductal outgrowth. Represses transcription of the glucocorticoid receptor by binding to the cis-acting regulatory sequence 5'-GAGAAAAGAAACTGGAGAAACTC-3'; this function is however unclear and would need additional experimental evidences. This chain is Rho GTPase-activating protein 35, found in Mus musculus (Mouse).